Here is a 62-residue protein sequence, read N- to C-terminus: Large ribosomal subunit protein bL28 (62 aa).

Residues 1 to 26 (MARKCYVTGKSPKSGNNRSHALNKTK) form a disordered region. A compositionally biased stretch (polar residues) spans 11–20 (SPKSGNNRSH).

It belongs to the bacterial ribosomal protein bL28 family.

The chain is Large ribosomal subunit protein bL28 from Exiguobacterium sibiricum (strain DSM 17290 / CCUG 55495 / CIP 109462 / JCM 13490 / 255-15).